The following is an 86-amino-acid chain: Acyl carrier protein (86 aa).

The Carrier domain occupies 7–85; sequence SKVDNIEQKV…DVVNYIKEHK (79 aa). An O-(pantetheine 4'-phosphoryl)serine modification is found at Ser-45.

The protein belongs to the acyl carrier protein (ACP) family. 4'-phosphopantetheine is transferred from CoA to a specific serine of apo-ACP by AcpS. This modification is essential for activity because fatty acids are bound in thioester linkage to the sulfhydryl of the prosthetic group.

It is found in the cytoplasm. It functions in the pathway lipid metabolism; fatty acid biosynthesis. Its function is as follows. Carrier of the growing fatty acid chain in fatty acid biosynthesis. In Rickettsia bellii (strain RML369-C), this protein is Acyl carrier protein.